Consider the following 111-residue polypeptide: Ig kappa chain V-III region PC 7769 (111 aa).

The interval 1 to 23 is framework-1; that stretch reads DIVLTQSPASLAVSLGQRATISC. Cys-23 and Cys-92 are joined by a disulfide. Residues 24 to 38 form a complementarity-determining-1 region; it reads KASQSVDYDGDSYMN. Positions 39-53 are framework-2; that stretch reads WYQQKPGQPPKVLIF. Residues 54–60 form a complementarity-determining-2 region; it reads AASNLES. Residues 61-92 are framework-3; the sequence is GIPARFSGSGSGTDFTLNIHPVEEEDAATYYC. Positions 93-101 are complementarity-determining-3; the sequence is QQSNEDPWT. The tract at residues 102 to 111 is framework-4; sequence FGSGTKLEIK.

This is Ig kappa chain V-III region PC 7769 from Mus musculus (Mouse).